Consider the following 375-residue polypeptide: Alpha-2,8-sialyltransferase 8B (375 aa).

Residues Met-1–Arg-6 lie on the Cytoplasmic side of the membrane. A helical; Signal-anchor for type II membrane protein membrane pass occupies residues Ser-7–Ala-23. Residues Asp-24–Thr-375 are Lumenal-facing. Residues Asn-60, Asn-72, Asn-89, and Asn-134 are each glycosylated (N-linked (GlcNAc...) asparagine). 2 cysteine pairs are disulfide-bonded: Cys-157–Cys-307 and Cys-171–Cys-371. Positions 162 and 185 each coordinate CMP-N-acetyl-beta-neuraminate. Asn-219 and Asn-234 each carry an N-linked (GlcNAc...) asparagine glycan. CMP-N-acetyl-beta-neuraminate contacts are provided by Thr-294, Thr-295, Gly-296, Trp-316, Tyr-329, and His-330. Catalysis depends on His-346, which acts as the Proton donor/acceptor.

The protein belongs to the glycosyltransferase 29 family. Autopolysialylated. Autopolysialylation is not a prerequisite for the polysialylation acitity, but enhances the polysialylation acitity. Highly expressed in fetal brain, kidney and heart and to a much lesser extent in adult heart and thymus.

Its subcellular location is the golgi apparatus membrane. It localises to the secreted. It is found in the cell membrane. The enzyme catalyses [N-acetyl-alpha-D-neuraminosyl-(2-&gt;8)](n) + CMP-N-acetyl-beta-neuraminate = [N-acetyl-alpha-D-neuraminosyl-(2-&gt;8)](n+1) + CMP + H(+). The protein operates within protein modification; protein glycosylation. Its function is as follows. Catalyzes the transfer of a sialic acid from a CMP-linked sialic acid donor onto a terminal alpha-2,3-, alpha-2,6-, or alpha-2,8-linked sialic acid of an N-linked glycan acceptor through alpha-2,8-linkages. Therefore, participates in polysialic acid synthesis on various sialylated N-acetyllactosaminyl oligosaccharides (alpha-2,3-, alpha-2,6-, or alpha-2,8-linked sialic acid), including NCAM1, NCAM1 N-glycans, FETUB N-glycans, and to a lesser extent sialylparagloboside (SPG) and AHSG, which does not require the initial addition of an alpha 2,8-sialic acid. However, does not exhibit sialic acid-polymerase activity. Catalyzes polysialic acid synthesis in the hippocampal on NCAM1 and supports neurite outgrowth. ST8SIA2-mediated polysialylation influences on oligodendrocyte differentiation and may promote the integrity of myelin and axons. The protein is Alpha-2,8-sialyltransferase 8B of Homo sapiens (Human).